The following is a 130-amino-acid chain: Small ribosomal subunit protein uS9 (130 aa).

The protein belongs to the universal ribosomal protein uS9 family.

The polypeptide is Small ribosomal subunit protein uS9 (Caldicellulosiruptor bescii (strain ATCC BAA-1888 / DSM 6725 / KCTC 15123 / Z-1320) (Anaerocellum thermophilum)).